The chain runs to 292 residues: MQAEIGIIGGSGLYSMPGVSDVQEVRVTTPFGEPSDPYVLGTLAGRKVAFLARHGRGHRLLPTELNFRANIHGFKQLGVERIISVSAVGSLKEEHRPLEFVIPDQFYDRTKQRVSTFFGEGIVAHVGFGDPVCGEMAKVVKHATDKAGVVAKAGGTYVCMEGPQFSTKAESNLYRSWGFDVIGMTNLQEAKLAREAELCYVTVAMVTDYDCWHPDHDAVTVDQIVAVLLKNAENACSVVREAVAAMPKDRTCKCGSALATAIITNKDVVPAATKEKLKLIIGKYFGEQKAGA.

Phosphate-binding positions include serine 11, 53-54 (RH), and 86-87 (SA). Methionine 184 contributes to the substrate binding site. Threonine 185 lines the phosphate pocket. 208 to 210 (DYD) is a binding site for substrate.

This sequence belongs to the PNP/MTAP phosphorylase family. MTAP subfamily. Homohexamer. Dimer of a homotrimer.

It catalyses the reaction S-methyl-5'-thioadenosine + phosphate = 5-(methylsulfanyl)-alpha-D-ribose 1-phosphate + adenine. It functions in the pathway amino-acid biosynthesis; L-methionine biosynthesis via salvage pathway; S-methyl-5-thio-alpha-D-ribose 1-phosphate from S-methyl-5'-thioadenosine (phosphorylase route): step 1/1. In terms of biological role, catalyzes the reversible phosphorylation of S-methyl-5'-thioadenosine (MTA) to adenine and 5-methylthioribose-1-phosphate. Involved in the breakdown of MTA, a major by-product of polyamine biosynthesis. Responsible for the first step in the methionine salvage pathway after MTA has been generated from S-adenosylmethionine. Has broad substrate specificity with 6-aminopurine nucleosides as preferred substrates. This is S-methyl-5'-thioadenosine phosphorylase from Koribacter versatilis (strain Ellin345).